The sequence spans 239 residues: Aldehyde dehydrogenase, dimeric NADP-preferring (239 aa).

Residue cysteine 30 is part of the active site.

It belongs to the aldehyde dehydrogenase family. Homodimer.

The protein resides in the cytoplasm. The enzyme catalyses an aldehyde + NAD(+) + H2O = a carboxylate + NADH + 2 H(+). It catalyses the reaction octanal + NAD(+) + H2O = octanoate + NADH + 2 H(+). In terms of biological role, ALDHs play a major role in the detoxification of alcohol-derived acetaldehyde. They are involved in the metabolism of corticosteroids, biogenic amines, neurotransmitters, and lipid peroxidation. Oxidizes medium and long chain aldehydes into non-toxic fatty acids. Preferentially oxidizes aromatic aldehyde substrates. Comprises about 50 percent of corneal epithelial soluble proteins. May play a role in preventing corneal damage caused by ultraviolet light. This Bos taurus (Bovine) protein is Aldehyde dehydrogenase, dimeric NADP-preferring (ALDH3A1).